The primary structure comprises 384 residues: 23S rRNA (uracil(747)-C(5))-methyltransferase RlmC (384 aa).

[4Fe-4S] cluster is bound by residues C3, C11, C14, and C87. S-adenosyl-L-methionine-binding residues include Q212, F241, E262, and N309. C336 acts as the Nucleophile in catalysis.

Belongs to the class I-like SAM-binding methyltransferase superfamily. RNA M5U methyltransferase family. RlmC subfamily.

It catalyses the reaction uridine(747) in 23S rRNA + S-adenosyl-L-methionine = 5-methyluridine(747) in 23S rRNA + S-adenosyl-L-homocysteine + H(+). Functionally, catalyzes the formation of 5-methyl-uridine at position 747 (m5U747) in 23S rRNA. The polypeptide is 23S rRNA (uracil(747)-C(5))-methyltransferase RlmC (Shewanella amazonensis (strain ATCC BAA-1098 / SB2B)).